The chain runs to 423 residues: Kynurenine--oxoglutarate transaminase 1 (423 aa).

Gly36 provides a ligand contact to substrate. An N6-succinyllysine modification is found at Lys82. Residue Asn185 participates in substrate binding. Lys247 is modified (N6-(pyridoxal phosphate)lysine). Position 398 (Arg398) interacts with substrate.

It belongs to the class-I pyridoxal-phosphate-dependent aminotransferase family. In terms of assembly, homodimer. Pyridoxal 5'-phosphate serves as cofactor. In terms of tissue distribution, detected in kidney.

The protein localises to the cytoplasm. The protein resides in the cytosol. Its subcellular location is the mitochondrion matrix. It catalyses the reaction L-kynurenine + 2-oxoglutarate = kynurenate + L-glutamate + H2O. The catalysed reaction is 3-phenylpyruvate + L-glutamine = 2-oxoglutaramate + L-phenylalanine. It carries out the reaction an S-substituted L-cysteine + H2O = a thiol + pyruvate + NH4(+). It functions in the pathway amino-acid degradation; L-kynurenine degradation; kynurenate from L-kynurenine: step 1/2. Its activity is regulated as follows. Inhibited by aminooxyacetate (in vitro). Catalyzes the irreversible transamination of the L-tryptophan metabolite L-kynurenine to form kynurenic acid (KA), an intermediate in the tryptophan catabolic pathway which is also a broad spectrum antagonist of the three ionotropic excitatory amino acid receptors among others. Metabolizes the cysteine conjugates of certain halogenated alkenes and alkanes to form reactive metabolites. Catalyzes the beta-elimination of S-conjugates and Se-conjugates of L-(seleno)cysteine, resulting in the cleavage of the C-S or C-Se bond. In Rattus norvegicus (Rat), this protein is Kynurenine--oxoglutarate transaminase 1.